The following is an 865-amino-acid chain: Fatty acyl-CoA synthetase and RNA processing-associated kinase 1 (865 aa).

A Protein kinase domain is found at 41–313 (YILGSTLGEG…LKQIKKHEWL (273 aa)). ATP-binding positions include 47-55 (LGEGEFGKV) and Lys-80. The active-site Proton acceptor is the Asp-175. Positions 341-398 (KPRRRYGSRPQSSCSTSSLGSRSDKRDSLVIDSTLITFPAPPQESQNHIITRPASIAS) are disordered. A compositionally biased stretch (low complexity) spans 352-361 (SSCSTSSLGS). Phosphoserine is present on Ser-441. Disordered stretches follow at residues 480–554 (ISGS…YTTP), 673–733 (TEES…LNEA), and 754–782 (SLYSSMDSKRKPSPPSQRRPKKDDSYQTN). Over residues 494 to 538 (STTMQTSKIQPNNMASSQNHQYNKNKTQNSLQSAKNFYRTSSSSH) the composition is skewed to polar residues. 2 stretches are compositionally biased toward basic and acidic residues: residues 690–708 (EGQESIDKAKTEDTSEKGS) and 724–733 (NHLERSLNEA).

This sequence belongs to the protein kinase superfamily. Ser/Thr protein kinase family. Interacts with FAA3, POL5 and TPA1.

The protein resides in the cytoplasm. The enzyme catalyses L-seryl-[protein] + ATP = O-phospho-L-seryl-[protein] + ADP + H(+). It catalyses the reaction L-threonyl-[protein] + ATP = O-phospho-L-threonyl-[protein] + ADP + H(+). Its function is as follows. Putative serine/threonine-protein kinase that may be involved in rRNA transcription and ribosome biogenesis. This chain is Fatty acyl-CoA synthetase and RNA processing-associated kinase 1 (FRK1), found in Saccharomyces cerevisiae (strain ATCC 204508 / S288c) (Baker's yeast).